Consider the following 304-residue polypeptide: Killer cell immunoglobulin-like receptor 2DS1 (304 aa).

A signal peptide spans 1–21 (MSLTVVSMACVGFFLLQGAWP). The Extracellular segment spans residues 22 to 245 (HEGVHRKPSL…SETGNPRHLH (224 aa)). Ig-like C2-type domains are found at residues 42-107 (EETV…VTHS) and 142-205 (GENV…FRDS). An intrachain disulfide couples cysteine 49 to cysteine 100. 4 N-linked (GlcNAc...) asparagine glycosylation sites follow: asparagine 67, asparagine 84, asparagine 144, and asparagine 178. A disulfide bond links cysteine 149 and cysteine 198. The interval 220–239 (VTGNPSNSWPSPTEPSSETG) is disordered. A compositionally biased stretch (low complexity) spans 223 to 239 (NPSNSWPSPTEPSSETG). A helical membrane pass occupies residues 246–264 (VLIGTSVVKIPFTILLFFL). Topologically, residues 265-304 (LHRWCSDKKNAAVMDQEPAGNRTVNSEDSDEQDHQEVSYA) are cytoplasmic. A disordered region spans residues 280 to 304 (QEPAGNRTVNSEDSDEQDHQEVSYA).

The protein belongs to the immunoglobulin superfamily. Interacts with the adapter protein TYROBP/DAP12; the interaction enhances KIR2DS1 stability at the cell surface. As to expression, expressed by NK cells.

It is found in the cell membrane. Receptor on natural killer (NK) cells for some HLA-C alleles such as w6. Does not inhibit the activity of NK cells. The chain is Killer cell immunoglobulin-like receptor 2DS1 from Homo sapiens (Human).